The following is a 245-amino-acid chain: 1-(5-phosphoribosyl)-5-[(5-phosphoribosylamino)methylideneamino] imidazole-4-carboxamide isomerase (245 aa).

Catalysis depends on D7, which acts as the Proton acceptor. The Proton donor role is filled by D129.

It belongs to the HisA/HisF family.

Its subcellular location is the cytoplasm. It carries out the reaction 1-(5-phospho-beta-D-ribosyl)-5-[(5-phospho-beta-D-ribosylamino)methylideneamino]imidazole-4-carboxamide = 5-[(5-phospho-1-deoxy-D-ribulos-1-ylimino)methylamino]-1-(5-phospho-beta-D-ribosyl)imidazole-4-carboxamide. The protein operates within amino-acid biosynthesis; L-histidine biosynthesis; L-histidine from 5-phospho-alpha-D-ribose 1-diphosphate: step 4/9. This is 1-(5-phosphoribosyl)-5-[(5-phosphoribosylamino)methylideneamino] imidazole-4-carboxamide isomerase from Salmonella dublin (strain CT_02021853).